The primary structure comprises 571 residues: Optineurin (571 aa).

Disordered regions lie at residues Met1 to Leu32 and Leu100 to Arg144. Positions Glu38–Ser170 form a coiled coil. The interval Met58–Thr209 is interaction with Rab8. Basic and acidic residues predominate over residues Leu100 to Leu143. Positions Asp176–Ile181 match the LIR motif. The residue at position 177 (Ser177) is a Phosphoserine; by TBK1. Residues Gly186–His197 are compositionally biased toward basic and acidic residues. Disordered regions lie at residues Gly186–Ser210 and Val255–Ser291. Ser198 bears the Phosphoserine mark. A compositionally biased stretch (polar residues) spans Pro201 to Ser210. Residues Cys233 to Asp502 are a coiled coil. Basic and acidic residues-rich tracts occupy residues Val255–Ile268 and Ser275–Pro286. Ser336 is subject to Phosphoserine. The interval Thr405–Ile571 is interaction with HD. The interval Arg406–Arg514 is interaction with MYO6. Positions Asp468–Arg473 match the UBAN motif. Ser520 carries the phosphoserine modification. Residues Gln541–Ile571 form a CCHC NOA-type zinc finger. Zn(2+) is bound by residues Cys549, Cys552, His565, and Cys569.

As to quaternary structure, self-associates. Interacts with HD. Interacts with GTF3A. Interacts with MYO6. Interacts (via UBAN) with ubiquitinated TFRC. Interacts with GTP-bound Rab8 (RAB8A and/or RAB8B). Interacts with TBC1D17. Interacts with TBK1. Interacts with TRAF3. Binds to linear ubiquitin chains. Interacts with LC3 family members MAP1LC3A, MAP1LC3B, GABARAP, GABARAPL1 and GABARAPL2; OPTN phosphorylation increases the association (at least with MAP1LC3B). Interacts with RAB12; the interaction may be indirect. Interacts with TBK1; this interaction leads to the Golgi localization of TBK1 and its subsequent activation. Interacts with palmitoyltransferase ZDHHC17/HIP14; the interaction does not lead to palmitoylation of OPTN. Interacts with CYLD. Interacts with TOM1; the interaction is indirect and is mediated by MYO6, which acts as a bridge between TOM1 and OPTN. Interacts with USP12; the interaction is independent of USP12 deubiquitinase activity and may be involved in regulation of autophagic flux. Post-translationally, phosphorylated by TBK1, leading to restrict bacterial proliferation in case of infection. Present in aqueous humor of the eye (at protein level).

Its subcellular location is the cytoplasm. It is found in the perinuclear region. The protein resides in the golgi apparatus. It localises to the trans-Golgi network. The protein localises to the cytoplasmic vesicle. Its subcellular location is the autophagosome. It is found in the recycling endosome. Functionally, plays an important role in the maintenance of the Golgi complex, in membrane trafficking, in exocytosis, through its interaction with myosin VI and Rab8. Links myosin VI to the Golgi complex and plays an important role in Golgi ribbon formation. Negatively regulates the induction of IFNB in response to RNA virus infection. Plays a neuroprotective role in the eye and optic nerve. Probably part of the TNF-alpha signaling pathway that can shift the equilibrium toward induction of cell death. May act by regulating membrane trafficking and cellular morphogenesis via a complex that contains Rab8 and huntingtin (HD). Mediates the interaction of Rab8 with the probable GTPase-activating protein TBC1D17 during Rab8-mediated endocytic trafficking, such as that of transferrin receptor (TFRC/TfR); regulates Rab8 recruitment to tubules emanating from the endocytic recycling compartment. Autophagy receptor that interacts directly with both the cargo to become degraded and an autophagy modifier of the MAP1 LC3 family; targets ubiquitin-coated bacteria (xenophagy) and appears to function in the same pathway as SQSTM1 and CALCOCO2/NDP52. This Macaca mulatta (Rhesus macaque) protein is Optineurin (OPTN).